We begin with the raw amino-acid sequence, 95 residues long: Putative protein RDUR (95 aa).

The segment covering 1 to 12 has biased composition (basic and acidic residues); the sequence is MNNSFNKEDRMS. The interval 1-20 is disordered; it reads MNNSFNKEDRMSSDTMVGSC.

Functionally, could play a role in innate immunity against viruses. The sequence is that of Putative protein RDUR from Homo sapiens (Human).